The sequence spans 144 residues: Eukaryotic translation initiation factor 1A, X-chromosomal (144 aa).

The span at 1–15 (MPKNKGKGGKNRRRG) shows a compositional bias: basic residues. Disordered stretches follow at residues 1–26 (MPKNKGKGGKNRRRGKNENESEKREL) and 114–144 (KINETDTFGPGDDDEIQFDDIGDDDEDIDDI). Over residues 16–26 (KNENESEKREL) the composition is skewed to basic and acidic residues. Residues 22–96 (EKRELVFKED…NKADVILKYN (75 aa)) enclose the S1-like domain. Residues 124–144 (GDDDEIQFDDIGDDDEDIDDI) are compositionally biased toward acidic residues.

The protein belongs to the eIF-1A family. Component of the 43S pre-initiation complex (43S PIC), which is composed of the 40S ribosomal subunit, EIF1, eIF1A (EIF1AX), eIF3 complex, EIF5 and eIF2-GTP-initiator tRNA complex (eIF2 ternary complex). Interacts with EIF5; this interaction contributes to the maintenance of EIF1 within the open 43S PIC. Interacts through its C-terminal domain (CTD) with the CTD of EIF5B; from the location of the start codon by the 43S complex until the formation of the 80S complex. As to quaternary structure, (Microbial infection) Interacts with human respiratory syncytial virus (HRSV) nucleoprotein; this interaction recruits EIF1AX to the viral replication complex to facilitate viral genomic RNA synthesis and virus production.

It is found in the cytoplasm. Component of the 43S pre-initiation complex (43S PIC), which binds to the mRNA cap-proximal region, scans mRNA 5'-untranslated region, and locates the initiation codon. This protein enhances formation of the cap-proximal complex. Together with EIF1, facilitates scanning, start codon recognition, promotion of the assembly of 48S complex at the initiation codon (43S PIC becomes 48S PIC after the start codon is reached), and dissociation of aberrant complexes. After start codon location, together with EIF5B orients the initiator methionine-tRNA in a conformation that allows 60S ribosomal subunit joining to form the 80S initiation complex. Is released after 80S initiation complex formation, just after GTP hydrolysis by EIF5B, and before release of EIF5B. Its globular part is located in the A site of the 40S ribosomal subunit. Its interaction with EIF5 during scanning contribute to the maintenance of EIF1 within the open 43S PIC. In contrast to yeast orthologs, does not bind EIF1. In Homo sapiens (Human), this protein is Eukaryotic translation initiation factor 1A, X-chromosomal (EIF1AX).